We begin with the raw amino-acid sequence, 334 residues long: tRNA U34 carboxymethyltransferase (334 aa).

Carboxy-S-adenosyl-L-methionine is bound by residues Lys91, Trp105, Lys110, Gly130, 152 to 154 (DPT), 181 to 182 (IE), Met196, Tyr200, and Arg315.

This sequence belongs to the class I-like SAM-binding methyltransferase superfamily. CmoB family. In terms of assembly, homotetramer.

The catalysed reaction is carboxy-S-adenosyl-L-methionine + 5-hydroxyuridine(34) in tRNA = 5-carboxymethoxyuridine(34) in tRNA + S-adenosyl-L-homocysteine + H(+). In terms of biological role, catalyzes carboxymethyl transfer from carboxy-S-adenosyl-L-methionine (Cx-SAM) to 5-hydroxyuridine (ho5U) to form 5-carboxymethoxyuridine (cmo5U) at position 34 in tRNAs. This chain is tRNA U34 carboxymethyltransferase, found in Klebsiella pneumoniae (strain 342).